Consider the following 170-residue polypeptide: Adenine phosphoribosyltransferase (170 aa).

Belongs to the purine/pyrimidine phosphoribosyltransferase family. Homodimer.

The protein resides in the cytoplasm. The catalysed reaction is AMP + diphosphate = 5-phospho-alpha-D-ribose 1-diphosphate + adenine. It functions in the pathway purine metabolism; AMP biosynthesis via salvage pathway; AMP from adenine: step 1/1. Catalyzes a salvage reaction resulting in the formation of AMP, that is energically less costly than de novo synthesis. The protein is Adenine phosphoribosyltransferase of Lactococcus lactis subsp. cremoris (strain MG1363).